The sequence spans 475 residues: Sulfate adenylyltransferase subunit 1 (475 aa).

The 215-residue stretch at 25–239 folds into the tr-type G domain; it reads KSLLRFLTCG…EVLETVEIQR (215 aa). A G1 region spans residues 34 to 41; the sequence is GSVDDGKS. 34–41 contributes to the GTP binding site; sequence GSVDDGKS. The interval 92 to 96 is G2; that stretch reads GITID. A G3 region spans residues 113-116; sequence DTPG. Residues 113-117 and 168-171 contribute to the GTP site; these read DTPGH and NKMD. The segment at 168 to 171 is G4; it reads NKMD. The interval 206–208 is G5; sequence SAL.

This sequence belongs to the TRAFAC class translation factor GTPase superfamily. Classic translation factor GTPase family. CysN/NodQ subfamily. As to quaternary structure, heterodimer composed of CysD, the smaller subunit, and CysN.

It carries out the reaction sulfate + ATP + H(+) = adenosine 5'-phosphosulfate + diphosphate. It functions in the pathway sulfur metabolism; hydrogen sulfide biosynthesis; sulfite from sulfate: step 1/3. In terms of biological role, with CysD forms the ATP sulfurylase (ATPS) that catalyzes the adenylation of sulfate producing adenosine 5'-phosphosulfate (APS) and diphosphate, the first enzymatic step in sulfur assimilation pathway. APS synthesis involves the formation of a high-energy phosphoric-sulfuric acid anhydride bond driven by GTP hydrolysis by CysN coupled to ATP hydrolysis by CysD. This chain is Sulfate adenylyltransferase subunit 1, found in Shigella dysenteriae serotype 1 (strain Sd197).